The sequence spans 364 residues: DNA replication and repair protein RecF (364 aa).

Position 33-40 (33-40 (GENGSGKT)) interacts with ATP.

It belongs to the RecF family.

It localises to the cytoplasm. Its function is as follows. The RecF protein is involved in DNA metabolism; it is required for DNA replication and normal SOS inducibility. RecF binds preferentially to single-stranded, linear DNA. It also seems to bind ATP. The protein is DNA replication and repair protein RecF of Rickettsia felis (strain ATCC VR-1525 / URRWXCal2) (Rickettsia azadi).